Here is a 445-residue protein sequence, read N- to C-terminus: ATP-dependent protease ATPase subunit HslU (445 aa).

Residues Ile17, 59-64 (GVGKTE), Asp254, Glu319, and Arg391 contribute to the ATP site.

Belongs to the ClpX chaperone family. HslU subfamily. In terms of assembly, a double ring-shaped homohexamer of HslV is capped on each side by a ring-shaped HslU homohexamer. The assembly of the HslU/HslV complex is dependent on binding of ATP.

The protein resides in the cytoplasm. In terms of biological role, ATPase subunit of a proteasome-like degradation complex; this subunit has chaperone activity. The binding of ATP and its subsequent hydrolysis by HslU are essential for unfolding of protein substrates subsequently hydrolyzed by HslV. HslU recognizes the N-terminal part of its protein substrates and unfolds these before they are guided to HslV for hydrolysis. This chain is ATP-dependent protease ATPase subunit HslU, found in Pseudomonas fluorescens (strain SBW25).